Here is a 276-residue protein sequence, read N- to C-terminus: Formamidopyrimidine-DNA glycosylase (276 aa).

The active-site Schiff-base intermediate with DNA is the P2. Residue E3 is the Proton donor of the active site. K59 serves as the catalytic Proton donor; for beta-elimination activity. DNA-binding residues include H93, R112, and R155. Residues 240-274 (QVYNREGKPCPRCGDKIAKKKVGGRSSYYCPTCQK) form an FPG-type zinc finger. Catalysis depends on R264, which acts as the Proton donor; for delta-elimination activity.

Belongs to the FPG family. As to quaternary structure, monomer. Requires Zn(2+) as cofactor.

The catalysed reaction is Hydrolysis of DNA containing ring-opened 7-methylguanine residues, releasing 2,6-diamino-4-hydroxy-5-(N-methyl)formamidopyrimidine.. The enzyme catalyses 2'-deoxyribonucleotide-(2'-deoxyribose 5'-phosphate)-2'-deoxyribonucleotide-DNA = a 3'-end 2'-deoxyribonucleotide-(2,3-dehydro-2,3-deoxyribose 5'-phosphate)-DNA + a 5'-end 5'-phospho-2'-deoxyribonucleoside-DNA + H(+). In terms of biological role, involved in base excision repair of DNA damaged by oxidation or by mutagenic agents. Acts as a DNA glycosylase that recognizes and removes damaged bases. Has a preference for oxidized purines, such as 7,8-dihydro-8-oxoguanine (8-oxoG). Has AP (apurinic/apyrimidinic) lyase activity and introduces nicks in the DNA strand. Cleaves the DNA backbone by beta-delta elimination to generate a single-strand break at the site of the removed base with both 3'- and 5'-phosphates. This chain is Formamidopyrimidine-DNA glycosylase, found in Pelotomaculum thermopropionicum (strain DSM 13744 / JCM 10971 / SI).